Here is a 621-residue protein sequence, read N- to C-terminus: DNA mismatch repair protein MutL (621 aa).

Belongs to the DNA mismatch repair MutL/HexB family.

Functionally, this protein is involved in the repair of mismatches in DNA. It is required for dam-dependent methyl-directed DNA mismatch repair. May act as a 'molecular matchmaker', a protein that promotes the formation of a stable complex between two or more DNA-binding proteins in an ATP-dependent manner without itself being part of a final effector complex. This Xylella fastidiosa (strain M12) protein is DNA mismatch repair protein MutL.